The primary structure comprises 102 residues: Protein GOLVEN 4 (102 aa).

The N-terminal stretch at 1-27 is a signal peptide; sequence MEMKKWSYANLITLALLFLFFIILLLA. Residues 28-89 constitute a propeptide that is removed on maturation; the sequence is FQGGSRDDDH…QEREVYVELR (62 aa). The interval 56–78 is disordered; the sequence is KSLKPINPTKKNGFEYPDQGSHD. Tyrosine 91 is subject to Sulfotyrosine. Proline 99 carries the hydroxyproline modification.

The protein belongs to the RGF family. Binds to LRR receptor-like serine/threonine-protein kinases to trigger their dimerization with SERK proteins and subsequent signaling. As to expression, expressed in roots and sepals.

The protein resides in the secreted. Functionally, signaling peptide (root growth factor) that promotes root hairs formation and growth. Maintains the postembryonic root stem cell niche. Regulates the pattern of root growth and lateral root development by modulating the length and the number of cortical cells in the root apical meristem (RAM), and the anticlinal asymmetric cell divisions in lateral root initiation cells. The polypeptide is Protein GOLVEN 4 (Arabidopsis thaliana (Mouse-ear cress)).